The chain runs to 337 residues: Putative carbonic anhydrase-like protein 2 (337 aa).

A signal peptide spans 1-16 (MIPWLLTACIYPCVIG). The region spanning 17 to 274 (PDFWGLLHGD…LNGRLVRTNI (258 aa)) is the Alpha-carbonic anhydrase domain. Residue Tyr140 is part of the active site. A glycan (N-linked (GlcNAc...) asparagine) is linked at Asn188. Substrate is bound at residue 212-213 (TF).

This sequence belongs to the alpha-carbonic anhydrase family.

Its subcellular location is the secreted. In Caenorhabditis elegans, this protein is Putative carbonic anhydrase-like protein 2 (cah-2).